The sequence spans 762 residues: Catalase-peroxidase (762 aa).

The disordered stretch occupies residues 1 to 22 (MAEAKCPFSQSRSNANVAGGGT). A cross-link (tryptophyl-tyrosyl-methioninium (Trp-Tyr) (with M-268)) is located at residues 96–242 (WHSAGTYRVF…LAASHMGLIY (147 aa)). Residue His-97 is the Proton acceptor of the active site. A cross-link (tryptophyl-tyrosyl-methioninium (Tyr-Met) (with W-96)) is located at residues 242–268 (YVNPEGPDGNPDPVAAARDIRTTFGRM). His-283 provides a ligand contact to heme b.

Belongs to the peroxidase family. Peroxidase/catalase subfamily. In terms of assembly, homodimer or homotetramer. Heme b serves as cofactor. Post-translationally, formation of the three residue Trp-Tyr-Met cross-link is important for the catalase, but not the peroxidase activity of the enzyme.

Its subcellular location is the cytoplasm. The catalysed reaction is H2O2 + AH2 = A + 2 H2O. The enzyme catalyses 2 H2O2 = O2 + 2 H2O. In terms of biological role, bifunctional enzyme with both catalase and broad-spectrum peroxidase activity. The polypeptide is Catalase-peroxidase (Aspergillus niger (strain ATCC MYA-4892 / CBS 513.88 / FGSC A1513)).